A 525-amino-acid polypeptide reads, in one-letter code: NAD(P)H-quinone oxidoreductase chain 4-1 (525 aa).

14 helical membrane-spanning segments follow: residues 4-24 (FPWL…IPII), 37-57 (LAVG…GFDL), 89-109 (LIIL…PVTL), 111-131 (PKLF…VFAV), 134-154 (ILLF…ILSI), 167-187 (FILY…TLAF), 210-230 (LLLY…FPLH), 241-261 (TAPA…YALL), 273-293 (AVFA…AAFT), 309-329 (ISHM…GMSG), 330-350 (AMLQ…MVGA), 385-405 (LALP…GFAT), 416-436 (IVVV…LSML), and 462-482 (VFII…PKLI).

It belongs to the complex I subunit 4 family.

It localises to the cellular thylakoid membrane. The catalysed reaction is a plastoquinone + NADH + (n+1) H(+)(in) = a plastoquinol + NAD(+) + n H(+)(out). It catalyses the reaction a plastoquinone + NADPH + (n+1) H(+)(in) = a plastoquinol + NADP(+) + n H(+)(out). NDH-1 shuttles electrons from NAD(P)H, via FMN and iron-sulfur (Fe-S) centers, to quinones in the respiratory chain. The immediate electron acceptor for the enzyme in this species is believed to be plastoquinone. Couples the redox reaction to proton translocation (for every two electrons transferred, four hydrogen ions are translocated across the cytoplasmic membrane), and thus conserves the redox energy in a proton gradient. The polypeptide is NAD(P)H-quinone oxidoreductase chain 4-1 (ndhD1) (Synechocystis sp. (strain ATCC 27184 / PCC 6803 / Kazusa)).